The sequence spans 122 residues: uncharacterized protein (122 aa).

It localises to the mitochondrion. This is an uncharacterized protein from Claviceps purpurea (Ergot fungus).